The sequence spans 120 residues: Large ribosomal subunit protein bL19c (120 aa).

This sequence belongs to the bacterial ribosomal protein bL19 family.

The protein resides in the plastid. It is found in the chloroplast. In Phaeodactylum tricornutum (strain CCAP 1055/1), this protein is Large ribosomal subunit protein bL19c.